We begin with the raw amino-acid sequence, 499 residues long: L-arabinose isomerase (499 aa).

Mn(2+)-binding residues include E306, E333, H350, and H449.

Belongs to the arabinose isomerase family. Mn(2+) serves as cofactor.

The enzyme catalyses beta-L-arabinopyranose = L-ribulose. It participates in carbohydrate degradation; L-arabinose degradation via L-ribulose; D-xylulose 5-phosphate from L-arabinose (bacterial route): step 1/3. Its function is as follows. Catalyzes the conversion of L-arabinose to L-ribulose. This is L-arabinose isomerase from Aeromonas salmonicida (strain A449).